The following is a 468-amino-acid chain: MTKTLPKDFIFGGATAAYQAEGATHTDGKGPVAWDKYLEDNYWYTAEPASDFYNRYPVDLKLSEEFGVNGIRISIAWSRIFPTGKGEVNPKGVEYYHNLFAECHKRHVEPFVTLHHFDTPEALHSNGDFLNRENIEHFVNYAELCFKEFSEVNYWTTFNEIGPIGDGQYLVGKFPPGIQYDLAKVFQSHHNMMVSHARAVKLFKDSGYSGEIGVVHALPTKYPFDANNPDDVRAAELEDIIHNKFILDATYLGKYSDKTMEGVNHILEVNGGELDLREEDFVALDAAKDLNDFLGINYYMSDWMQAFDGETEIIHNGKGEKGSSKYQIKGVGRRKAPVDVPKTDWDWIIFPQGLYDQIMRVKADYPNYKKIYITENGLGYKDEFVDNTVYDDGRIDYVKKHLEVISDAISDGTNVKGYFMWSLMDVFSWSNGYEKRYGLFYVDFETQERYPKKSAYWYKKVAETQVIE.

5 residues coordinate D-galactose 6-phosphate: Gln-19, His-116, Asn-159, Glu-160, and Asn-297. The Proton donor role is filled by Glu-160. Glu-375 serves as the catalytic Nucleophile. Residues Ser-428, Trp-429, Lys-435, and Tyr-437 each contribute to the D-galactose 6-phosphate site.

This sequence belongs to the glycosyl hydrolase 1 family.

It carries out the reaction a 6-phospho-beta-D-galactoside + H2O = D-galactose 6-phosphate + an alcohol. Its pathway is carbohydrate metabolism; lactose degradation; D-galactose 6-phosphate and beta-D-glucose from lactose 6-phosphate: step 1/1. The chain is 6-phospho-beta-galactosidase from Streptococcus pyogenes serotype M6 (strain ATCC BAA-946 / MGAS10394).